A 128-amino-acid polypeptide reads, in one-letter code: V-type proton ATPase subunit F (128 aa).

It belongs to the V-ATPase F subunit family. V-ATPase is a heteromultimeric enzyme composed of a peripheral catalytic V1 complex (components A to H) attached to an integral membrane V0 proton pore complex (components: a, c, c'', d and e).

It localises to the vacuole membrane. Its function is as follows. Subunit of the peripheral V1 complex of vacuolar ATPase essential for assembly or catalytic function. V-ATPase is responsible for acidifying a variety of intracellular compartments in eukaryotic cells. The polypeptide is V-type proton ATPase subunit F (VHA-F) (Arabidopsis thaliana (Mouse-ear cress)).